Reading from the N-terminus, the 347-residue chain is F-box protein At2g14500 (347 aa).

In terms of domain architecture, F-box spans 6-52 (PLTLSELPHDLLRNIFNRLSFADFHRATWNSISKQTAPPKTKSPWLI).

This Arabidopsis thaliana (Mouse-ear cress) protein is F-box protein At2g14500.